The sequence spans 88 residues: Acyl-CoA-binding protein homolog (88 aa).

Positions 3 to 88 (PQADFDKAAG…AHELIEKYGL (86 aa)) constitute an ACB domain. An acyl-CoA-binding positions include K15, 30 to 34 (YGLYK), K52, K56, and Y75.

Belongs to the ACBP family. As to expression, brain. Is selectively expressed in glial cells.

It is found in the endoplasmic reticulum. The protein resides in the golgi apparatus. In terms of biological role, may play important functions in the control of brain and pituitary activities. May regulate GABA neurotransmission through a paracrine and/or autocrine mechanism. May not bind acyl-CoA esters. This is Acyl-CoA-binding protein homolog from Pelophylax ridibundus (Marsh frog).